Consider the following 509-residue polypeptide: Maturase K (509 aa).

The protein belongs to the intron maturase 2 family. MatK subfamily.

It is found in the plastid. The protein localises to the chloroplast. Its function is as follows. Usually encoded in the trnK tRNA gene intron. Probably assists in splicing its own and other chloroplast group II introns. The protein is Maturase K of Jacaranda mimosifolia (Jacaranda).